Consider the following 201-residue polypeptide: Molybdenum cofactor guanylyltransferase (201 aa).

GTP contacts are provided by residues 14 to 16 (LAG), lysine 31, and aspartate 104. Residue aspartate 104 participates in Mg(2+) binding.

It belongs to the MobA family. Monomer. It depends on Mg(2+) as a cofactor.

The protein localises to the cytoplasm. It carries out the reaction Mo-molybdopterin + GTP + H(+) = Mo-molybdopterin guanine dinucleotide + diphosphate. Transfers a GMP moiety from GTP to Mo-molybdopterin (Mo-MPT) cofactor (Moco or molybdenum cofactor) to form Mo-molybdopterin guanine dinucleotide (Mo-MGD) cofactor. The polypeptide is Molybdenum cofactor guanylyltransferase (Helicobacter pylori (strain G27)).